Here is a 471-residue protein sequence, read N- to C-terminus: Phosphatidylinositol 4-kinase type 2-alpha (471 aa).

Disordered regions lie at residues 1–25 (MDET…QCSP) and 48–101 (PGSA…PDDP). The segment covering 90–101 (AERERNKFPDDP) has biased composition (basic and acidic residues). The PI3K/PI4K catalytic domain maps to 117 to 445 (DILPERISQG…VQTPPVIVET (329 aa)). The tract at residues 123-129 (ISQGSSG) is G-loop. ATP is bound by residues 124 to 130 (SQGSSGS) and lysine 145. An important for substrate binding region spans residues 150–152 (EPY). Positions 158–171 (KWTKWLQKLCCPCC) are important for interaction with membranes. S-palmitoyl cysteine attachment occurs at residues cysteine 167, cysteine 168, cysteine 170, and cysteine 171. 254-257 (QLFV) is an ATP binding site. An important for interaction with membranes region spans residues 261–269 (KDADYWLRR). The interval 298–306 (RNTDRGNDN) is catalytic loop. An activation loop region spans residues 336–356 (AIDNGLAFPLKHPDSWRAYPF). Aspartate 338 lines the ATP pocket. The tract at residues 351 to 360 (WRAYPFYWAW) is important for interaction with membranes.

Belongs to the PI3/PI4-kinase family. Type II PI4K subfamily.

It is found in the golgi apparatus. The protein resides in the trans-Golgi network membrane. Its subcellular location is the membrane raft. It localises to the endosome. The protein localises to the endosome membrane. It is found in the cytoplasmic vesicle. The protein resides in the cell projection. Its subcellular location is the dendrite. It localises to the presynaptic cell membrane. The protein localises to the synapse. It is found in the synaptosome. The protein resides in the mitochondrion. Its subcellular location is the membrane. It localises to the cell membrane. The protein localises to the perikaryon. It is found in the neuron projection. The enzyme catalyses a 1,2-diacyl-sn-glycero-3-phospho-(1D-myo-inositol) + ATP = a 1,2-diacyl-sn-glycero-3-phospho-(1D-myo-inositol 4-phosphate) + ADP + H(+). In terms of biological role, membrane-bound phosphatidylinositol-4 kinase (PI4-kinase) that catalyzes the phosphorylation of phosphatidylinositol (PI) to phosphatidylinositol 4-phosphate (PI4P), a lipid that plays important roles in endocytosis, Golgi function, protein sorting and membrane trafficking. Besides, phosphorylation of phosphatidylinositol (PI) to phosphatidylinositol 4-phosphate (PI4P) is the first committed step in the generation of phosphatidylinositol 4,5-bisphosphate (PIP2), a precursor of the second messenger inositol 1,4,5-trisphosphate (InsP3). The chain is Phosphatidylinositol 4-kinase type 2-alpha (pi4k2a) from Xenopus tropicalis (Western clawed frog).